We begin with the raw amino-acid sequence, 154 residues long: Ribonuclease H (154 aa).

In terms of domain architecture, RNase H type-1 spans 1 to 141 (MKRIEAYTDG…ADELAREGME (141 aa)). 4 residues coordinate Mg(2+): Asp9, Glu47, Asp69, and Asp133.

Belongs to the RNase H family. Monomer. The cofactor is Mg(2+).

Its subcellular location is the cytoplasm. The enzyme catalyses Endonucleolytic cleavage to 5'-phosphomonoester.. Functionally, endonuclease that specifically degrades the RNA of RNA-DNA hybrids. The chain is Ribonuclease H from Brucella anthropi (strain ATCC 49188 / DSM 6882 / CCUG 24695 / JCM 21032 / LMG 3331 / NBRC 15819 / NCTC 12168 / Alc 37) (Ochrobactrum anthropi).